Consider the following 133-residue polypeptide: Protein msa (133 aa).

A run of 4 helical transmembrane segments spans residues 3-23 (YLIL…AIGL), 27-47 (ILAA…ILFF), 55-75 (YIFF…VHLM), and 103-123 (FGFD…IVLY).

The protein resides in the cell membrane. Its function is as follows. Accessory element involved in the expression of sarA and several virulence factors. Modulates SarA production and/or function in a strain-dependent manner. Affects the transcription of the accessory gene regulator (agr) and genes encoding virulence factors including alpha toxin (hla) and protein A (spa). The chain is Protein msa (msa) from Staphylococcus aureus (strain USA300).